The primary structure comprises 156 residues: Phytohormone-binding protein (156 aa).

3 residues coordinate gibberellin A3: glutamine 22, glutamine 68, and threonine 141.

It belongs to the BetVI family.

Functionally, binds gibberellin A3 (GA3) in vitro. This is Phytohormone-binding protein from Medicago truncatula (Barrel medic).